We begin with the raw amino-acid sequence, 347 residues long: Probable nitronate monooxygenase (347 aa).

Residues asparagine 69, glutamine 171, glycine 176, glycine 213, and 232–235 (QIGS) contribute to the FMN site.

This sequence belongs to the nitronate monooxygenase family. NMO class I subfamily. The cofactor is FMN.

It carries out the reaction 3 propionate 3-nitronate + 3 O2 + H2O = 3 3-oxopropanoate + 2 nitrate + nitrite + H2O2 + 3 H(+). Functionally, nitronate monooxygenase that uses molecular oxygen to catalyze the oxidative denitrification of alkyl nitronates. Acts on propionate 3-nitronate (P3N), the presumed physiological substrate. Probably functions in the detoxification of P3N, a metabolic poison produced by plants and fungi as a defense mechanism. The polypeptide is Probable nitronate monooxygenase (yrpB) (Bacillus subtilis (strain 168)).